A 448-amino-acid chain; its full sequence is Probable rhamnogalacturonase E (448 aa).

An N-terminal signal peptide occupies residues 1 to 22 (MTWSTSFLVATSLLSIINSVHA). A disulfide bond links cysteine 43 and cysteine 69. Asparagine 54, asparagine 92, and asparagine 131 each carry an N-linked (GlcNAc...) asparagine glycan. The Proton donor role is filled by aspartate 221. Residues cysteine 223 and cysteine 240 are joined by a disulfide bond. 2 N-linked (GlcNAc...) asparagine glycosylation sites follow: asparagine 256 and asparagine 284. Histidine 296 is an active-site residue. N-linked (GlcNAc...) asparagine glycans are attached at residues asparagine 323 and asparagine 328. 2 disulfides stabilise this stretch: cysteine 346/cysteine 352 and cysteine 374/cysteine 382.

This sequence belongs to the glycosyl hydrolase 28 family.

The protein localises to the secreted. In terms of biological role, pectinolytic enzymes consist of four classes of enzymes: pectine lyase, polygalacturonase, pectin methylesterase and rhamnogalacturonase. Hydrolyzes alpha-D-galacturonopyranosyl-(1,2)-alpha-L-rhamnopyranosyl linkages in the backbone of the hairy regions of pectins. In Aspergillus niger (strain ATCC MYA-4892 / CBS 513.88 / FGSC A1513), this protein is Probable rhamnogalacturonase E (rhgE).